The chain runs to 281 residues: Elongation factor Ts (281 aa).

The tract at residues 86-89 (TDFV) is involved in Mg(2+) ion dislocation from EF-Tu.

Belongs to the EF-Ts family.

The protein localises to the cytoplasm. In terms of biological role, associates with the EF-Tu.GDP complex and induces the exchange of GDP to GTP. It remains bound to the aminoacyl-tRNA.EF-Tu.GTP complex up to the GTP hydrolysis stage on the ribosome. The sequence is that of Elongation factor Ts from Beutenbergia cavernae (strain ATCC BAA-8 / DSM 12333 / CCUG 43141 / JCM 11478 / NBRC 16432 / NCIMB 13614 / HKI 0122).